A 69-amino-acid polypeptide reads, in one-letter code: MKKQKRDLHQRAYVKGYRAGMAGRSKALSERCHTQARQDWLTGWREGREDMWNGLTPVDGTYKAASFSQ.

It belongs to the ribosome modulation factor family.

The protein resides in the cytoplasm. Functionally, during stationary phase, converts 70S ribosomes to an inactive dimeric form (100S ribosomes). This chain is Ribosome modulation factor, found in Marinomonas mediterranea (strain ATCC 700492 / JCM 21426 / NBRC 103028 / MMB-1).